The chain runs to 597 residues: Elongation factor 4 (597 aa).

In terms of domain architecture, tr-type G spans 2–184 (NNIRNFSIIA…ALIAKVPPPK (183 aa)). Residues 14–19 (DHGKST) and 131–134 (NKID) contribute to the GTP site.

The protein belongs to the TRAFAC class translation factor GTPase superfamily. Classic translation factor GTPase family. LepA subfamily.

Its subcellular location is the cell inner membrane. The catalysed reaction is GTP + H2O = GDP + phosphate + H(+). In terms of biological role, required for accurate and efficient protein synthesis under certain stress conditions. May act as a fidelity factor of the translation reaction, by catalyzing a one-codon backward translocation of tRNAs on improperly translocated ribosomes. Back-translocation proceeds from a post-translocation (POST) complex to a pre-translocation (PRE) complex, thus giving elongation factor G a second chance to translocate the tRNAs correctly. Binds to ribosomes in a GTP-dependent manner. The protein is Elongation factor 4 of Herminiimonas arsenicoxydans.